Here is a 402-residue protein sequence, read N- to C-terminus: NADH-quinone oxidoreductase subunit D (402 aa).

This sequence belongs to the complex I 49 kDa subunit family. In terms of assembly, NDH-1 is composed of 14 different subunits. Subunits NuoB, C, D, E, F, and G constitute the peripheral sector of the complex.

Its subcellular location is the cell inner membrane. The catalysed reaction is a quinone + NADH + 5 H(+)(in) = a quinol + NAD(+) + 4 H(+)(out). In terms of biological role, NDH-1 shuttles electrons from NADH, via FMN and iron-sulfur (Fe-S) centers, to quinones in the respiratory chain. The immediate electron acceptor for the enzyme in this species is believed to be ubiquinone. Couples the redox reaction to proton translocation (for every two electrons transferred, four hydrogen ions are translocated across the cytoplasmic membrane), and thus conserves the redox energy in a proton gradient. The polypeptide is NADH-quinone oxidoreductase subunit D (Rhodopseudomonas palustris (strain TIE-1)).